We begin with the raw amino-acid sequence, 289 residues long: Thiosulfate sulfurtransferase (289 aa).

The Rhodanese 1 domain occupies 24–142 (VGAGLRVLDA…WVKEGHPVTA (119 aa)). Positions 143–158 (EPSQPAEAVFKAKLDK) are hinge. The region spanning 172–284 (GSKKFQVVDS…WFHRAPPQYK (113 aa)) is the Rhodanese 2 domain. R186 is a binding site for substrate. C244 serves as the catalytic Cysteine persulfide intermediate. Position 246 (K246) interacts with substrate.

In terms of assembly, monomer. In terms of tissue distribution, expressed in numerous tissues.

Its subcellular location is the mitochondrion matrix. The catalysed reaction is thiosulfate + hydrogen cyanide = thiocyanate + sulfite + 2 H(+). Its function is as follows. Together with MRPL18, acts as a mitochondrial import factor for the cytosolic 5S rRNA. Only the nascent unfolded cytoplasmic form is able to bind to the 5S rRNA. Formation of iron-sulfur complexes and cyanide detoxification. This chain is Thiosulfate sulfurtransferase (TST), found in Gallus gallus (Chicken).